Here is a 350-residue protein sequence, read N- to C-terminus: Small ribosomal subunit biogenesis GTPase RsgA (350 aa).

Residues 1-17 (MSKNKLSKGQQRRVNAN) show a composition bias toward polar residues. The tract at residues 1-33 (MSKNKLSKGQQRRVNANHQRRLKTSKEKPDYDD) is disordered. In terms of domain architecture, CP-type G spans 104 to 273 (TSVLTRPDFY…VIDSPGVREF (170 aa)). GTP-binding positions include 160-163 (NKID) and 214-222 (GQSGVGKSS). Residues Cys297, Cys302, His304, and Cys310 each contribute to the Zn(2+) site.

The protein belongs to the TRAFAC class YlqF/YawG GTPase family. RsgA subfamily. Monomer. Associates with 30S ribosomal subunit, binds 16S rRNA. Requires Zn(2+) as cofactor.

Its subcellular location is the cytoplasm. Functionally, one of several proteins that assist in the late maturation steps of the functional core of the 30S ribosomal subunit. Helps release RbfA from mature subunits. May play a role in the assembly of ribosomal proteins into the subunit. Circularly permuted GTPase that catalyzes slow GTP hydrolysis, GTPase activity is stimulated by the 30S ribosomal subunit. This chain is Small ribosomal subunit biogenesis GTPase RsgA, found in Escherichia coli (strain ATCC 8739 / DSM 1576 / NBRC 3972 / NCIMB 8545 / WDCM 00012 / Crooks).